The primary structure comprises 223 residues: Deoxyribose-phosphate aldolase (223 aa).

The active-site Proton donor/acceptor is the aspartate 89. Lysine 152 functions as the Schiff-base intermediate with acetaldehyde in the catalytic mechanism. Lysine 181 serves as the catalytic Proton donor/acceptor.

This sequence belongs to the DeoC/FbaB aldolase family. DeoC type 1 subfamily.

It is found in the cytoplasm. It carries out the reaction 2-deoxy-D-ribose 5-phosphate = D-glyceraldehyde 3-phosphate + acetaldehyde. It functions in the pathway carbohydrate degradation; 2-deoxy-D-ribose 1-phosphate degradation; D-glyceraldehyde 3-phosphate and acetaldehyde from 2-deoxy-alpha-D-ribose 1-phosphate: step 2/2. Catalyzes a reversible aldol reaction between acetaldehyde and D-glyceraldehyde 3-phosphate to generate 2-deoxy-D-ribose 5-phosphate. This is Deoxyribose-phosphate aldolase from Bacillus cereus (strain B4264).